Consider the following 132-residue polypeptide: Fatty acid-binding protein, intestinal (132 aa).

Ala-2 is modified (N-acetylalanine). Residues Trp-83 and Arg-107 each coordinate hexadecanoate. Tetradecanoate-binding residues include Trp-83 and Arg-107.

This sequence belongs to the calycin superfamily. Fatty-acid binding protein (FABP) family. As to expression, expressed in the small intestine. Expression in the mucosal cells of the ileum extends from the midvillar region to the villus tips.

The protein resides in the cytoplasm. Its function is as follows. FABPs are thought to play a role in the intracellular transport of long-chain fatty acids and their acyl-CoA esters. FABP2 is probably involved in triglyceride-rich lipoprotein synthesis. Binds saturated long-chain fatty acids with a high affinity, but binds with a lower affinity to unsaturated long-chain fatty acids. FABP2 may also help maintain energy homeostasis by functioning as a lipid sensor. This is Fatty acid-binding protein, intestinal (Fabp2) from Rattus norvegicus (Rat).